The chain runs to 67 residues: Large ribosomal subunit protein bL32 (67 aa).

The span at 1–19 (MAVPKRKMSRSNTRSRRSQ) shows a compositional bias: basic residues. The tract at residues 1 to 22 (MAVPKRKMSRSNTRSRRSQWKA) is disordered.

The protein belongs to the bacterial ribosomal protein bL32 family.

This is Large ribosomal subunit protein bL32 from Kineococcus radiotolerans (strain ATCC BAA-149 / DSM 14245 / SRS30216).